The primary structure comprises 192 residues: uncharacterized protein (192 aa).

The first 18 residues, 1-18 (MNSKFILKYFILAFFLVS), serve as a signal peptide directing secretion. A lipid anchor (N-palmitoyl cysteine) is attached at Cys19. Cys19 is lipidated: S-diacylglycerol cysteine.

The protein localises to the cell membrane. This is an uncharacterized protein from Borreliella burgdorferi (strain ATCC 35210 / DSM 4680 / CIP 102532 / B31) (Borrelia burgdorferi).